The following is a 274-amino-acid chain: Thiazole synthase (274 aa).

Lys111 functions as the Schiff-base intermediate with DXP in the catalytic mechanism. 1-deoxy-D-xylulose 5-phosphate contacts are provided by residues Gly172, 198–199 (AG), and 220–221 (NT).

This sequence belongs to the ThiG family. Homotetramer. Forms heterodimers with either ThiH or ThiS.

It is found in the cytoplasm. It carries out the reaction [ThiS sulfur-carrier protein]-C-terminal-Gly-aminoethanethioate + 2-iminoacetate + 1-deoxy-D-xylulose 5-phosphate = [ThiS sulfur-carrier protein]-C-terminal Gly-Gly + 2-[(2R,5Z)-2-carboxy-4-methylthiazol-5(2H)-ylidene]ethyl phosphate + 2 H2O + H(+). Its pathway is cofactor biosynthesis; thiamine diphosphate biosynthesis. Catalyzes the rearrangement of 1-deoxy-D-xylulose 5-phosphate (DXP) to produce the thiazole phosphate moiety of thiamine. Sulfur is provided by the thiocarboxylate moiety of the carrier protein ThiS. In vitro, sulfur can be provided by H(2)S. The sequence is that of Thiazole synthase from Gloeobacter violaceus (strain ATCC 29082 / PCC 7421).